The sequence spans 529 residues: MKKIMLIASAMSALSLPFSASAIELGDEGGLECGPYAKVGVVGGMITGVESTRLDPADAGGKKQLPLTTSMPFGGTLAAGMTIAPGFRAELGVMYLANVKAEVESGKTGSDADIRSGADSPMPQRYKLTPPQPTIMPISIADRDLGVDIPNVPQGGANHLGDNLGANDIRRADDRITWLKNYAGVDYMVPDPNNPQARIVNPVLLNIPQGPPNANPRQAMQPCSILNHDHWRHLVVGITAMSNANKPSVSPIKVLSEKIVQIYRDVKPFARVAGIEVPSDPLPNSASVEQIQNKMQELNDILDEIRDSFDGCIGGNAFANQIQLNFRIPQAQQQGQGQQQQQAQATAQEAAAAAAVRVLNNNDQIIKLYKDLVKLKRHAGIKKAMEELAAQDGGCNGGGDNKKKRGASEDSDAGGASKGGKGKETKETEFDLSMIVGQVKLYADLFTTESFSIYAGLGAGLAYTSGKIDGVDIKANTGMVASGALGVAINAAEGVYVDIEGSYMHSFSKIEEKYSINPLMASFGVRYNF.

The first 22 residues, 1-22, serve as a signal peptide directing secretion; that stretch reads MKKIMLIASAMSALSLPFSASA. Residues 67–87 traverse the membrane as a helical segment; that stretch reads LTTSMPFGGTLAAGMTIAPGF. Over residues 106–116 the composition is skewed to basic and acidic residues; it reads GKTGSDADIRS. Disordered regions lie at residues 106–134 and 392–424; these read GKTGSDADIRSGADSPMPQRYKLTPPQPT and DGGCNGGGDNKKKRGASEDSDAGGASKGGKGKE. Residues 477–492 traverse the membrane as a helical segment; sequence TGMVASGALGVAINAA.

The protein localises to the cell membrane. Functionally, may be an adherent factor for rickettsial adsorption to the host-cell surface and a determinant of virulence of individual rickettsial strain. It is the major outer membrane protein. This Orientia tsutsugamushi (Rickettsia tsutsugamushi) protein is 56 kDa type-specific antigen.